We begin with the raw amino-acid sequence, 228 residues long: Nuclear phosphoprotein UL3 homolog (228 aa).

It belongs to the alphaherpesvirinae HHV-1 UL3 family. Post-translationally, phosphorylated.

The protein resides in the host nucleus. The sequence is that of Nuclear phosphoprotein UL3 homolog (MDV015) from Gallus gallus (Chicken).